The chain runs to 288 residues: Cell division protein ZipA (288 aa).

Met-1 is a topological domain (periplasmic). The helical transmembrane segment at 2–22 (EIGLREWLIVIGIIVIAGILF) threads the bilayer. At 23-288 (DGWRRMRGGK…FERRALTQKR (266 aa)) the chain is on the cytoplasmic side. 2 stretches are compositionally biased toward basic and acidic residues: residues 66-75 (KEPQLDEHDL) and 83-93 (REAREPRESGS). Residues 66–141 (KEPQLDEHDL…AKSSPAVADK (76 aa)) are disordered. Positions 106-117 (GDLNLDLDLDGG) are enriched in low complexity.

The protein belongs to the ZipA family. In terms of assembly, interacts with FtsZ via their C-terminal domains.

It localises to the cell inner membrane. Functionally, essential cell division protein that stabilizes the FtsZ protofilaments by cross-linking them and that serves as a cytoplasmic membrane anchor for the Z ring. Also required for the recruitment to the septal ring of downstream cell division proteins. The chain is Cell division protein ZipA from Pseudomonas fluorescens (strain Pf0-1).